The following is a 346-amino-acid chain: GTPase Obg (346 aa).

The Obg domain occupies 1 to 159 (MRFVDEVTFV…RELRLELQLL (159 aa)). The disordered stretch occupies residues 128 to 148 (LHFKSSTNRAPRQSTEGTAGE). The segment covering 130-144 (FKSSTNRAPRQSTEG) has biased composition (polar residues). Residues 160–335 (ADVGLLGMPN…LCGDIMNDLE (176 aa)) enclose the OBG-type G domain. GTP-binding positions include 166–173 (GMPNVGKS), 191–195 (FTTLY), 213–216 (DIPG), 285–288 (NRLD), and 316–318 (SGL). 2 residues coordinate Mg(2+): S173 and T193.

The protein belongs to the TRAFAC class OBG-HflX-like GTPase superfamily. OBG GTPase family. As to quaternary structure, monomer. Requires Mg(2+) as cofactor.

It localises to the cytoplasm. Its function is as follows. An essential GTPase which binds GTP, GDP and possibly (p)ppGpp with moderate affinity, with high nucleotide exchange rates and a fairly low GTP hydrolysis rate. Plays a role in control of the cell cycle, stress response, ribosome biogenesis and in those bacteria that undergo differentiation, in morphogenesis control. The sequence is that of GTPase Obg from Halorhodospira halophila (strain DSM 244 / SL1) (Ectothiorhodospira halophila (strain DSM 244 / SL1)).